Reading from the N-terminus, the 140-residue chain is Histone H2B (140 aa).

Residues M1–P10 show a composition bias toward basic and acidic residues. Positions M1–K48 are disordered. 2 positions are modified to N6-acetyllysine; alternate: K8 and K9. Glycyl lysine isopeptide (Lys-Gly) (interchain with G-Cter in SUMO); alternate cross-links involve residues K8 and K9. The segment covering S11 to A21 has biased composition (low complexity). K15 carries the N6-acetyllysine modification. An N6-acetyllysine; alternate modification is found at K25. A Glycyl lysine isopeptide (Lys-Gly) (interchain with G-Cter in SUMO); alternate cross-link involves residue K25. Residue K26 forms a Glycyl lysine isopeptide (Lys-Gly) (interchain with G-Cter in SUMO) linkage. K134 is covalently cross-linked (Glycyl lysine isopeptide (Lys-Gly) (interchain with G-Cter in ubiquitin)).

This sequence belongs to the histone H2B family. As to quaternary structure, the nucleosome is a histone octamer containing two molecules each of H2A, H2B, H3 and H4 assembled in one H3-H4 heterotetramer and two H2A-H2B heterodimers. The octamer wraps approximately 147 bp of DNA. Monoubiquitinated by the ubc2-bre1 complex to form H2BK123ub1. H2BK123ub1 gives a specific tag for epigenetic transcriptional activation and is also prerequisite for H3K4me and H3K79me formation. H2BK123ub1 also modulates the formation of double-strand breaks during meiosis and is a prerequisite for DNA-damage checkpoint activation. In terms of processing, acetylated by gcn5 to form H2BK11ac and H2BK16ac. H2BK16ac can also be formed by esa1. Acetylation of N-terminal lysines and particularly formation of H2BK11acK16ac has a positive effect on transcription. Post-translationally, sumoylation to form H2BK6su or H2BK7su, and probably also H2BK16su or H2BK17su, occurs preferentially near the telomeres and represses gene transcription.

The protein localises to the nucleus. The protein resides in the chromosome. Core component of nucleosome. Nucleosomes wrap and compact DNA into chromatin, limiting DNA accessibility to the cellular machineries which require DNA as a template. Histones thereby play a central role in transcription regulation, DNA repair, DNA replication and chromosomal stability. DNA accessibility is regulated via a complex set of post-translational modifications of histones, also called histone code, and nucleosome remodeling. This Emericella nidulans (strain FGSC A4 / ATCC 38163 / CBS 112.46 / NRRL 194 / M139) (Aspergillus nidulans) protein is Histone H2B (htbA).